The following is a 576-amino-acid chain: Arginine--tRNA ligase (576 aa).

Positions 121-131 (PNLAKEMHVGH) match the 'HIGH' region motif.

It belongs to the class-I aminoacyl-tRNA synthetase family. Monomer.

The protein resides in the cytoplasm. It catalyses the reaction tRNA(Arg) + L-arginine + ATP = L-arginyl-tRNA(Arg) + AMP + diphosphate. The protein is Arginine--tRNA ligase of Alteromonas mediterranea (strain DSM 17117 / CIP 110805 / LMG 28347 / Deep ecotype).